Reading from the N-terminus, the 220-residue chain is Transmembrane emp24 domain-containing protein 1 (220 aa).

The first 19 residues, 1–19 (MAWSSSFLFIVLPLAAAVA), serve as a signal peptide directing secretion. The Extracellular segment spans residues 20 to 187 (VQPQDTELTF…LQDSNLERVN (168 aa)). Positions 36–118 (QECFYQTTLY…EKLVFFELIF (83 aa)) constitute a GOLD domain. Residues 138 to 164 (ELLDIKLEDIKESIESVKSRLERSIQM) are a coiled coil. The chain crosses the membrane as a helical span at residues 188–208 (FWSAINVGVLVTVAFLQVYML). Over 209 to 220 (KSLFDDKRKIRT) the chain is Cytoplasmic. Positions 211 to 212 (LF) match the COPII vesicle coat-binding motif. The COPI vesicle coat-binding motif lies at 211-220 (LFDDKRKIRT).

Belongs to the EMP24/GP25L family. In terms of assembly, homodimer in endoplasmic reticulum, endoplasmic reticulum-Golgi intermediate compartment and cis-Golgi network. Interacts with IL1RL1. Interacts with RNF26; this interaction is important to modulate innate immune signaling through the cGAS-STING pathway.

It localises to the cell membrane. The protein resides in the endoplasmic reticulum membrane. Its subcellular location is the golgi apparatus. The protein localises to the cis-Golgi network membrane. It is found in the endoplasmic reticulum-Golgi intermediate compartment membrane. Potential role in vesicular protein trafficking, mainly in the early secretory pathway. May act as a cargo receptor at the lumenal side for incorporation of secretory cargo molecules into transport vesicles and may be involved in vesicle coat formation at the cytoplasmic side. Plays a positive role in IL-33-mediated IL-8 and IL-6 production by interacting with interleukin-33 receptor IL1RL1. Plays also a role in the modulation of innate immune signaling through the cGAS-STING pathway by interacting with RNF26. This chain is Transmembrane emp24 domain-containing protein 1 (tmed1), found in Xenopus tropicalis (Western clawed frog).